The sequence spans 181 residues: UPF0301 protein MXAN_2022 (181 aa).

Belongs to the UPF0301 (AlgH) family.

This Myxococcus xanthus (strain DK1622) protein is UPF0301 protein MXAN_2022.